A 171-amino-acid polypeptide reads, in one-letter code: UPF0316 protein EAT1b_0871 (171 aa).

Helical transmembrane passes span 4–24, 32–52, and 57–77; these read ILLI…RTIM, IAGL…GIVF, and TVGM…GGFV.

Belongs to the UPF0316 family.

The protein resides in the cell membrane. The polypeptide is UPF0316 protein EAT1b_0871 (Exiguobacterium sp. (strain ATCC BAA-1283 / AT1b)).